Here is a 725-residue protein sequence, read N- to C-terminus: Heme/hemopexin utilization protein C (725 aa).

An N-terminal signal peptide occupies residues 1–21 (MRFSKLSLAIATTLVTANALA). A TBDR plug domain is found at 36–147 (DPSRFAYTPE…LGGVVAMRTP (112 aa)). Residues 158–725 (KFGVKIRQGY…NAKISAVYSF (568 aa)) form the TBDR beta-barrel domain. Residues 708–725 (SLMEGTGRNAKISAVYSF) carry the TonB C-terminal box motif.

The protein belongs to the TonB-dependent receptor family.

It localises to the cell outer membrane. Functionally, required for utilization of free heme at low concentrations. The polypeptide is Heme/hemopexin utilization protein C (hxuC) (Haemophilus influenzae).